A 37-amino-acid polypeptide reads, in one-letter code: Potassium channel toxin alpha-KTx 1.4 (37 aa).

Intrachain disulfides connect Cys-7/Cys-28, Cys-13/Cys-33, and Cys-17/Cys-35.

This sequence belongs to the short scorpion toxin superfamily. Potassium channel inhibitor family. Alpha-KTx 01 subfamily. As to expression, expressed by the venom gland.

The protein resides in the secreted. Functionally, blocks selectively the high conductance calcium-activated (maxi-K) potassium channels. The sequence is that of Potassium channel toxin alpha-KTx 1.4 from Centruroides limbatus (Bark scorpion).